The primary structure comprises 340 residues: Fructose-1,6-bisphosphatase class 1 (340 aa).

Residues E107, D126, L128, and D129 each contribute to the Mg(2+) site. N215 is a binding site for substrate. E287 provides a ligand contact to Mg(2+).

The protein belongs to the FBPase class 1 family. As to quaternary structure, homotetramer. Mg(2+) is required as a cofactor.

Its subcellular location is the cytoplasm. The enzyme catalyses beta-D-fructose 1,6-bisphosphate + H2O = beta-D-fructose 6-phosphate + phosphate. Its pathway is carbohydrate biosynthesis; gluconeogenesis. The polypeptide is Fructose-1,6-bisphosphatase class 1 (Brucella canis (strain ATCC 23365 / NCTC 10854 / RM-666)).